The following is a 152-amino-acid chain: FMN reductase (NADH) RutF (152 aa).

This sequence belongs to the non-flavoprotein flavin reductase family. RutF subfamily.

The enzyme catalyses FMNH2 + NAD(+) = FMN + NADH + 2 H(+). Functionally, catalyzes the reduction of FMN to FMNH2 which is used to reduce pyrimidine by RutA via the Rut pathway. The polypeptide is FMN reductase (NADH) RutF (Shigella sonnei (strain Ss046)).